The following is a 233-amino-acid chain: Sugar fermentation stimulation protein homolog (233 aa).

It belongs to the SfsA family.

This Pyrobaculum neutrophilum (strain DSM 2338 / JCM 9278 / NBRC 100436 / V24Sta) (Thermoproteus neutrophilus) protein is Sugar fermentation stimulation protein homolog.